A 342-amino-acid chain; its full sequence is MSTDIRSKFLQVYDTLKSELINDPAFEFDDDSRQWIEKMLDYNVPGGKLNRGLSVIDSYQLLKGGKLTDDEIFHASALGWCVEWLQAYFLVLDDIMDESHTRRGQPCWFRLPKVGMIAANDGIILRNHVPRILKKHFRGKPYYVDLVDLFNEVEFQTASGQMIDLITTLVGEKDLSKYSLSIHRRIVQYKTAYYSFYLPVACALLMFGEDLEKHVEVKNVLVEMGTYFQVQDDYLDCFGAPEVIGKIGTDIEDFKCSWLVVKALELANEEQKKVLHENYGKKDPSPVAKVKELYNTLNLQGVFEDYENTSYKKLITSIEGHPSKAVQAVLKSFLGKIYRRQK.

Residues Lys-48, Arg-51, and Gln-86 each contribute to the isopentenyl diphosphate site. Mg(2+) contacts are provided by Asp-93 and Asp-97. Arg-102 contributes to the dimethylallyl diphosphate binding site. Residue Arg-103 participates in isopentenyl diphosphate binding. Dimethylallyl diphosphate-binding residues include Lys-190, Thr-191, Gln-229, Lys-246, and Lys-255.

The protein belongs to the FPP/GGPP synthase family. It depends on Mg(2+) as a cofactor.

The protein localises to the cytoplasm. It catalyses the reaction isopentenyl diphosphate + dimethylallyl diphosphate = (2E)-geranyl diphosphate + diphosphate. The catalysed reaction is isopentenyl diphosphate + (2E)-geranyl diphosphate = (2E,6E)-farnesyl diphosphate + diphosphate. It participates in isoprenoid biosynthesis; farnesyl diphosphate biosynthesis; farnesyl diphosphate from geranyl diphosphate and isopentenyl diphosphate: step 1/1. The protein operates within isoprenoid biosynthesis; geranyl diphosphate biosynthesis; geranyl diphosphate from dimethylallyl diphosphate and isopentenyl diphosphate: step 1/1. Catalyzes the sequential condensation of isopentenyl pyrophosphate with the allylic pyrophosphates, dimethylallyl pyrophosphate, and then with the resultant geranylpyrophosphate to the ultimate product farnesyl pyrophosphate. The protein is Farnesyl pyrophosphate synthase 2 (FPS2) of Parthenium argentatum (Guayule rubber plant).